The sequence spans 69 residues: Sec-independent protein translocase protein TatA (69 aa).

The chain crosses the membrane as a helical span at residues 1 to 21 (MMPGPFELIIILVIVLLLFGG).

Belongs to the TatA/E family. In terms of assembly, the Tat system comprises two distinct complexes: a TatABC complex, containing multiple copies of TatA, TatB and TatC subunits, and a separate TatA complex, containing only TatA subunits. Substrates initially bind to the TatABC complex, which probably triggers association of the separate TatA complex to form the active translocon.

Its subcellular location is the cell inner membrane. Part of the twin-arginine translocation (Tat) system that transports large folded proteins containing a characteristic twin-arginine motif in their signal peptide across membranes. TatA could form the protein-conducting channel of the Tat system. The polypeptide is Sec-independent protein translocase protein TatA (Vesicomyosocius okutanii subsp. Calyptogena okutanii (strain HA)).